A 458-amino-acid chain; its full sequence is Selection and upkeep of intraepithelial T-cells protein 3 (458 aa).

An N-terminal signal peptide occupies residues 1–24 (MGSIQIIFAAYCVVLCVLQMLVLS). The Extracellular segment spans residues 25–237 (SEQFTITGLE…ESISIVLTGD (213 aa)). The Ig-like V-type domain occupies 26-141 (EQFTITGLER…EEHITEVKVT (116 aa)). 2 disulfide bridges follow: Cys49-Cys123 and Cys163-Cys217. In terms of domain architecture, Ig-like C1-type spans 142-231 (ATSSDIKIIM…LLTHQEESIS (90 aa)). N-linked (GlcNAc...) asparagine glycosylation occurs at Asn200. A helical membrane pass occupies residues 238–258 (LFSWKIDWILILSIIACVMIP). The Cytoplasmic segment spans residues 259–283 (YSMTSYLQQHLIHGSCSQRSHHWRK). The helical transmembrane segment at 284–304 (NAMVCMSSVIAIIGSMLILHL) threads the bilayer. The Extracellular segment spans residues 305-324 (KQRVPISDQHFELDTLYLED). A helical membrane pass occupies residues 325–345 (ISVILCVVIVFNLKLNLLTYY). The Cytoplasmic segment spans residues 346-359 (RLERKYDGCTPGCK). Residues 360 to 380 (ACFYILKIIIIILPFVFTFGC) form a helical membrane-spanning segment. Topologically, residues 381-414 (YNAIFLKYHQLQKKVSIPDPLYYFYTSWLVNMEM) are extracellular. A helical membrane pass occupies residues 415 to 435 (LGVFLVFFPTFINLIEFSQFI). The Cytoplasmic segment spans residues 436 to 458 (KTVPKPIWLCQENMREDDAIRHR).

The protein belongs to the SKINT family. Expressed in skin and thymus.

It is found in the membrane. In terms of biological role, may act by engaging a cell surface molecule on immature T-cells in the embryonic thymus. The protein is Selection and upkeep of intraepithelial T-cells protein 3 (Skint3) of Mus musculus (Mouse).